A 287-amino-acid polypeptide reads, in one-letter code: 4-hydroxybenzoate octaprenyltransferase (287 aa).

5 helical membrane-spanning segments follow: residues 35–55 (FAAGGLPDLKVFIIFVIGVVV), 96–116 (LFGVMGLFAFSLVLMLNPLVV), 211–231 (IIAAFQLAALSCFIIAGMLAG), 235–255 (IYGLGILAFIGFAVYQQKLIY), and 262–282 (CFTAFLNNNWAGMVLYIALTL).

Belongs to the UbiA prenyltransferase family. Mg(2+) serves as cofactor.

The protein resides in the cell inner membrane. It carries out the reaction all-trans-octaprenyl diphosphate + 4-hydroxybenzoate = 4-hydroxy-3-(all-trans-octaprenyl)benzoate + diphosphate. It participates in cofactor biosynthesis; ubiquinone biosynthesis. In terms of biological role, catalyzes the prenylation of para-hydroxybenzoate (PHB) with an all-trans polyprenyl group. Mediates the second step in the final reaction sequence of ubiquinone-8 (UQ-8) biosynthesis, which is the condensation of the polyisoprenoid side chain with PHB, generating the first membrane-bound Q intermediate 3-octaprenyl-4-hydroxybenzoate. The chain is 4-hydroxybenzoate octaprenyltransferase from Shewanella halifaxensis (strain HAW-EB4).